Reading from the N-terminus, the 120-residue chain is Large ribosomal subunit protein bL20 (120 aa).

The protein belongs to the bacterial ribosomal protein bL20 family.

Its function is as follows. Binds directly to 23S ribosomal RNA and is necessary for the in vitro assembly process of the 50S ribosomal subunit. It is not involved in the protein synthesizing functions of that subunit. The sequence is that of Large ribosomal subunit protein bL20 from Methylobacillus flagellatus (strain ATCC 51484 / DSM 6875 / VKM B-1610 / KT).